The chain runs to 112 residues: T cell receptor alpha variable 13-1 (112 aa).

Residues 1–20 (MTSIRAVFIFLWLQLDLVNG) form the signal peptide. One can recognise an Ig-like domain in the interval 21 to 112 (ENVEQHPSTL…DSAVYFCAAS (92 aa)). Cysteines 42 and 109 form a disulfide. Asn86 is a glycosylation site (N-linked (GlcNAc...) asparagine).

Alpha-beta TR is a heterodimer composed of an alpha and beta chain; disulfide-linked. The alpha-beta TR is associated with the transmembrane signaling CD3 coreceptor proteins to form the TR-CD3 (TcR or TCR). The assembly of alpha-beta TR heterodimers with CD3 occurs in the endoplasmic reticulum where a single alpha-beta TR heterodimer associates with one CD3D-CD3E heterodimer, one CD3G-CD3E heterodimer and one CD247 homodimer forming a stable octameric structure. CD3D-CD3E and CD3G-CD3E heterodimers preferentially associate with TR alpha and TR beta chains, respectively. The association of the CD247 homodimer is the last step of TcR assembly in the endoplasmic reticulum and is required for transport to the cell surface.

The protein localises to the cell membrane. In terms of biological role, v region of the variable domain of T cell receptor (TR) alpha chain that participates in the antigen recognition. Alpha-beta T cell receptors are antigen specific receptors which are essential to the immune response and are present on the cell surface of T lymphocytes. Recognize peptide-major histocompatibility (MH) (pMH) complexes that are displayed by antigen presenting cells (APC), a prerequisite for efficient T cell adaptive immunity against pathogens. Binding of alpha-beta TR to pMH complex initiates TR-CD3 clustering on the cell surface and intracellular activation of LCK that phosphorylates the ITAM motifs of CD3G, CD3D, CD3E and CD247 enabling the recruitment of ZAP70. In turn ZAP70 phosphorylates LAT, which recruits numerous signaling molecules to form the LAT signalosome. The LAT signalosome propagates signal branching to three major signaling pathways, the calcium, the mitogen-activated protein kinase (MAPK) kinase and the nuclear factor NF-kappa-B (NF-kB) pathways, leading to the mobilization of transcription factors that are critical for gene expression and essential for T cell growth and differentiation. The T cell repertoire is generated in the thymus, by V-(D)-J rearrangement. This repertoire is then shaped by intrathymic selection events to generate a peripheral T cell pool of self-MH restricted, non-autoaggressive T cells. Post-thymic interaction of alpha-beta TR with the pMH complexes shapes TR structural and functional avidity. The polypeptide is T cell receptor alpha variable 13-1 (Homo sapiens (Human)).